A 371-amino-acid chain; its full sequence is Leucine-rich repeat-containing protein 58 (371 aa).

At serine 24 the chain carries Phosphoserine. LRR repeat units follow at residues 45-66 (ALLR…LGSG), 69-91 (HLQL…LALR), 92-113 (GLRT…PKGL), 121-143 (SLQV…LELR), 144-166 (ALQT…ENLQ), 167-189 (SLEC…GNLP), 190-211 (SLNY…LSQL), 213-234 (SLRS…ILNL), and 236-256 (HLEE…RDLT). Residues 340 to 351 (SSASHSSTSQSE) show a composition bias toward low complexity. Residues 340-361 (SSASHSSTSQSESDSEDEASVA) are disordered.

The polypeptide is Leucine-rich repeat-containing protein 58 (LRRC58) (Homo sapiens (Human)).